Consider the following 519-residue polypeptide: Protein BANP (519 aa).

Phosphoserine is present on residues serine 19, serine 90, and serine 100. The stretch at 53–90 (IKTICLRLDSIEAKLQALEATCKSLEEKLDLVTNKQHS) forms a coiled coil. Lysine 133 is covalently cross-linked (Glycyl lysine isopeptide (Lys-Gly) (interchain with G-Cter in SUMO2)). The interval 152–342 (NAVPGRRQNT…FSRRTPNSSS (191 aa)) is interaction with CUX1 and HDAC1. Residues 168-177 (GQEDSHHEDG) are compositionally biased toward basic and acidic residues. The segment at 168–196 (GQEDSHHEDGESGSEASDSVSSCGQAGSQ) is disordered. A compositionally biased stretch (low complexity) spans 180–189 (GSEASDSVSS). The BEN domain maps to 226–322 (EMRVRCAIIP…SKCRTAWRRK (97 aa)). Lysine 275 carries the N6-acetyllysine modification. A disordered region spans residues 327–364 (SLAVKSFSRRTPNSSSYCPSEPMMSTPPPASELPQPQP). The span at 335-344 (RRTPNSSSYC) shows a compositional bias: polar residues. Residues threonine 337 and threonine 352 each carry the phosphothreonine modification. Positions 342–393 (SYCPSEPMMSTPPPASELPQPQPQPQALHYALANAQQVQIHQIGEDGQVQVG) are DNA-binding. A compositionally biased stretch (pro residues) spans 351-364 (STPPPASELPQPQP).

Belongs to the BANP/SMAR1 family. In terms of assembly, part of a corepressor complex containing BANP, HDAC1, SIN3A, SIN3B, RBL1 and RBL2. Forms a trimeric complex in the nucleus consisting of BANP, HDAC6 and KHDRBS1/SAM68; HDAC6 keeps KHDRBS1 in a deacetylated state which inhibits the inclusion of CD44 alternate exons. The complex is disrupted by MAPK1/MAPK3-mediated phosphorylation of BANP which results in BANP export to the cytoplasm. This facilitates acetylation of KHDRBS1 and CD44 variant exon inclusion. Interacts with TP53. Interacts with CUX1/CDP. Interacts with HDAC1. Post-translationally, MAPK1/MAPK3-mediated phosphorylation at Thr-337 and Thr-352 results in export to the cytoplasm. In terms of tissue distribution, down-regulated in breast cancer cell lines.

Its subcellular location is the nucleus. It is found in the nucleus speckle. It localises to the cytoplasm. Controls V(D)J recombination during T-cell development by repressing T-cell receptor (TCR) beta enhancer function. Binds to scaffold/matrix attachment region beta (S/MARbeta), an ATC-rich DNA sequence located upstream of the TCR beta enhancer. Represses cyclin D1 transcription by recruiting HDAC1 to its promoter, thereby diminishing H3K9ac, H3S10ph and H4K8ac levels. Promotes TP53 activation, which causes cell cycle arrest. Plays a role in the regulation of alternative splicing. Binds to CD44 pre-mRNA and negatively regulates the inclusion of CD44 proximal variable exons v2-v6 but has no effect on distal variable exons v7-v10. The polypeptide is Protein BANP (BANP) (Homo sapiens (Human)).